We begin with the raw amino-acid sequence, 174 residues long: Terminase small subunit (174 aa).

The protein belongs to the skunalikevirus terminase small subunit family.

Functionally, probable terminase small subunit. The terminase lies at a unique vertex of the procapsid and is composed of two subunits, a small terminase subunit and a large terminase subunit. Both terminase subunits heterooligomerize and are docked on the portal protein to form the packaging machine. Once the capsid is packaged with the DNA, the terminase complex is substituted by the connector proteins gp15. The polypeptide is Terminase small subunit (Lactococcus phage p2 (Lactococcus lactis bacteriophage p2)).